The following is a 191-amino-acid chain: dCTP deaminase (191 aa).

DCTP is bound by residues 112–117 (KSTYAR), 136–138 (TLE), Gln157, Tyr173, and Gln183. Glu138 acts as the Proton donor/acceptor in catalysis.

The protein belongs to the dCTP deaminase family. Homotrimer.

It carries out the reaction dCTP + H2O + H(+) = dUTP + NH4(+). It functions in the pathway pyrimidine metabolism; dUMP biosynthesis; dUMP from dCTP (dUTP route): step 1/2. Catalyzes the deamination of dCTP to dUTP. This is dCTP deaminase from Xylella fastidiosa (strain 9a5c).